The chain runs to 231 residues: tRNA (guanine-N(7)-)-methyltransferase (231 aa).

Residues Glu-62, Glu-87, Asp-114, and Asp-136 each coordinate S-adenosyl-L-methionine. Asp-136 is an active-site residue. Substrate contacts are provided by residues Lys-140, Asp-172, and Thr-210–Glu-213.

Belongs to the class I-like SAM-binding methyltransferase superfamily. TrmB family.

It catalyses the reaction guanosine(46) in tRNA + S-adenosyl-L-methionine = N(7)-methylguanosine(46) in tRNA + S-adenosyl-L-homocysteine. It functions in the pathway tRNA modification; N(7)-methylguanine-tRNA biosynthesis. In terms of biological role, catalyzes the formation of N(7)-methylguanine at position 46 (m7G46) in tRNA. This is tRNA (guanine-N(7)-)-methyltransferase from Zymomonas mobilis subsp. mobilis (strain ATCC 31821 / ZM4 / CP4).